The chain runs to 208 residues: ATP-dependent Clp protease proteolytic subunit (208 aa).

The Nucleophile role is filled by serine 107. Histidine 132 is an active-site residue.

This sequence belongs to the peptidase S14 family. As to quaternary structure, fourteen ClpP subunits assemble into 2 heptameric rings which stack back to back to give a disk-like structure with a central cavity, resembling the structure of eukaryotic proteasomes.

Its subcellular location is the cytoplasm. The enzyme catalyses Hydrolysis of proteins to small peptides in the presence of ATP and magnesium. alpha-casein is the usual test substrate. In the absence of ATP, only oligopeptides shorter than five residues are hydrolyzed (such as succinyl-Leu-Tyr-|-NHMec, and Leu-Tyr-Leu-|-Tyr-Trp, in which cleavage of the -Tyr-|-Leu- and -Tyr-|-Trp bonds also occurs).. Cleaves peptides in various proteins in a process that requires ATP hydrolysis. Has a chymotrypsin-like activity. Plays a major role in the degradation of misfolded proteins. The sequence is that of ATP-dependent Clp protease proteolytic subunit from Jannaschia sp. (strain CCS1).